The chain runs to 248 residues: MADS-box transcription factor 8 (248 aa).

Positions 1–61 (MGRGRVELKR…GKLYEFCSGQ (61 aa)) constitute an MADS-box domain. Residues 90–180 (VQSSRNEYLK…RRKLEESNQL (91 aa)) form the K-box domain.

In terms of assembly, may interact with the K-box of MADS6 and MADS16. May interact with MADS13 and MADS18. Binds to FCA. Expressed in lodicules, stamens and carpels.

The protein localises to the nucleus. In terms of biological role, probable transcription factor. May be involved in the control of flowering time. The protein is MADS-box transcription factor 8 (MADS8) of Oryza sativa subsp. japonica (Rice).